The primary structure comprises 101 residues: Small ribosomal subunit protein uS14 (101 aa).

This sequence belongs to the universal ribosomal protein uS14 family. In terms of assembly, part of the 30S ribosomal subunit. Contacts proteins S3 and S10.

Binds 16S rRNA, required for the assembly of 30S particles and may also be responsible for determining the conformation of the 16S rRNA at the A site. The protein is Small ribosomal subunit protein uS14 of Pasteurella multocida (strain Pm70).